The following is a 287-amino-acid chain: Elongation factor Ts (287 aa).

The involved in Mg(2+) ion dislocation from EF-Tu stretch occupies residues 81 to 84 (TDFV).

This sequence belongs to the EF-Ts family.

The protein localises to the cytoplasm. Functionally, associates with the EF-Tu.GDP complex and induces the exchange of GDP to GTP. It remains bound to the aminoacyl-tRNA.EF-Tu.GTP complex up to the GTP hydrolysis stage on the ribosome. This chain is Elongation factor Ts, found in Nitratidesulfovibrio vulgaris (strain ATCC 29579 / DSM 644 / CCUG 34227 / NCIMB 8303 / VKM B-1760 / Hildenborough) (Desulfovibrio vulgaris).